A 525-amino-acid chain; its full sequence is COP9 signalosome complex subunit 1b (525 aa).

A PCI domain is found at H298–Q460.

It belongs to the CSN1 family. As to quaternary structure, component of the CSN complex, probably composed of CSN1b, alien/CSN2, CSN3, CSN4, CSN5, CSN6, CSN7 and CSN8.

It is found in the cytoplasm. Its subcellular location is the nucleus. Its function is as follows. Essential component of the COP9 signalosome complex (CSN), a complex involved in various cellular and developmental processes. The CSN complex is an essential regulator of the ubiquitin (Ubl) conjugation pathway by mediating the deneddylation of the cullin subunits of the SCF-type E3 ligase complexes, leading to decrease the Ubl ligase activity of SCF. The CSN complex plays an essential role in oogenesis and embryogenesis and is required for proper photoreceptor R cell differentiation and promote lamina glial cell migration or axon targeting. It also promotes Ubl-dependent degradation of cyclin E (CycE) during early oogenesis. In Drosophila melanogaster (Fruit fly), this protein is COP9 signalosome complex subunit 1b (CSN1b).